Here is a 176-residue protein sequence, read N- to C-terminus: Translation initiation factor IF-3 (176 aa).

The protein belongs to the IF-3 family. As to quaternary structure, monomer.

It localises to the cytoplasm. In terms of biological role, IF-3 binds to the 30S ribosomal subunit and shifts the equilibrium between 70S ribosomes and their 50S and 30S subunits in favor of the free subunits, thus enhancing the availability of 30S subunits on which protein synthesis initiation begins. This chain is Translation initiation factor IF-3, found in Wolinella succinogenes (strain ATCC 29543 / DSM 1740 / CCUG 13145 / JCM 31913 / LMG 7466 / NCTC 11488 / FDC 602W) (Vibrio succinogenes).